The sequence spans 309 residues: Taste receptor type 2 member 8 (309 aa).

The Extracellular portion of the chain corresponds to 1–7; the sequence is MFSPADN. Residues 8 to 28 traverse the membrane as a helical segment; sequence IFIILITGEFILGILGNGYIA. At 29–50 the chain is on the cytoplasmic side; that stretch reads LVNWIDWIKKKKISTVDYILTN. Residues 51–71 form a helical membrane-spanning segment; sequence LVIARICLISVMVVNGIVIVL. Topologically, residues 72–82 are extracellular; it reads NPDVYTKNKQQ. The chain crosses the membrane as a helical span at residues 83-103; sequence IVIFTFWTFANYLNMWITTCL. Topologically, residues 104 to 131 are cytoplasmic; it reads NVFYFLKIASSSHPLFLWLKWKIDMVVH. A helical membrane pass occupies residues 132–152; sequence WILLGCFAISLLVSLIAAIVL. The Extracellular portion of the chain corresponds to 153–184; sequence SCDYRFHAIAKHKRNITEMFHVSKXPYFEPLT. The N-linked (GlcNAc...) asparagine glycan is linked to Asn167. A helical transmembrane segment spans residues 185-205; that stretch reads LFNLFAIVPFIVSLISFFLLV. Residues 206 to 239 lie on the Cytoplasmic side of the membrane; the sequence is RSLWRHTKQIKLYATGSRDPSTEVHVRAIKTMTS. Residues 240–260 traverse the membrane as a helical segment; that stretch reads FIFFFFLYFISSILMTFSYLM. The Extracellular portion of the chain corresponds to 261–266; that stretch reads TKYKLA. Residues 267–287 traverse the membrane as a helical segment; it reads VEFGEIAAILYPLGHSLILIV. Over 288–309 the chain is Cytoplasmic; sequence LNNKLRQIFVRMLTCRKIACVI.

It belongs to the G-protein coupled receptor T2R family.

It localises to the membrane. Its function is as follows. Receptor that may play a role in the perception of bitterness and is gustducin-linked. May play a role in sensing the chemical composition of the gastrointestinal content. The activity of this receptor may stimulate alpha gustducin, mediate PLC-beta-2 activation and lead to the gating of TRPM5. This chain is Taste receptor type 2 member 8 (TAS2R8), found in Pan paniscus (Pygmy chimpanzee).